The sequence spans 565 residues: Phosphomethylpyrimidine synthase (565 aa).

Substrate is bound by residues Asn-203, Met-232, Tyr-261, His-297, 317 to 319, 358 to 361, and Glu-397; these read SRG and DGLR. His-401 lines the Zn(2+) pocket. Residue Tyr-424 coordinates substrate. Residue His-465 coordinates Zn(2+). Positions 541, 544, and 549 each coordinate [4Fe-4S] cluster.

It belongs to the ThiC family. [4Fe-4S] cluster serves as cofactor.

It catalyses the reaction 5-amino-1-(5-phospho-beta-D-ribosyl)imidazole + S-adenosyl-L-methionine = 4-amino-2-methyl-5-(phosphooxymethyl)pyrimidine + CO + 5'-deoxyadenosine + formate + L-methionine + 3 H(+). Its pathway is cofactor biosynthesis; thiamine diphosphate biosynthesis. Its function is as follows. Catalyzes the synthesis of the hydroxymethylpyrimidine phosphate (HMP-P) moiety of thiamine from aminoimidazole ribotide (AIR) in a radical S-adenosyl-L-methionine (SAM)-dependent reaction. The sequence is that of Phosphomethylpyrimidine synthase from Bacteroides thetaiotaomicron (strain ATCC 29148 / DSM 2079 / JCM 5827 / CCUG 10774 / NCTC 10582 / VPI-5482 / E50).